The sequence spans 669 residues: UvrABC system protein B (669 aa).

The region spanning T26–R183 is the Helicase ATP-binding domain. G39–T46 serves as a coordination point for ATP. Positions Y92 to I115 match the Beta-hairpin motif. Residues Q431 to L597 enclose the Helicase C-terminal domain. One can recognise a UVR domain in the interval A631–A666.

The protein belongs to the UvrB family. As to quaternary structure, forms a heterotetramer with UvrA during the search for lesions. Interacts with UvrC in an incision complex.

Its subcellular location is the cytoplasm. The UvrABC repair system catalyzes the recognition and processing of DNA lesions. A damage recognition complex composed of 2 UvrA and 2 UvrB subunits scans DNA for abnormalities. Upon binding of the UvrA(2)B(2) complex to a putative damaged site, the DNA wraps around one UvrB monomer. DNA wrap is dependent on ATP binding by UvrB and probably causes local melting of the DNA helix, facilitating insertion of UvrB beta-hairpin between the DNA strands. Then UvrB probes one DNA strand for the presence of a lesion. If a lesion is found the UvrA subunits dissociate and the UvrB-DNA preincision complex is formed. This complex is subsequently bound by UvrC and the second UvrB is released. If no lesion is found, the DNA wraps around the other UvrB subunit that will check the other stand for damage. The chain is UvrABC system protein B from Xylella fastidiosa (strain M12).